The sequence spans 124 residues: Large ribosomal subunit protein bL12 (124 aa).

Belongs to the bacterial ribosomal protein bL12 family. Homodimer. Part of the ribosomal stalk of the 50S ribosomal subunit. Forms a multimeric L10(L12)X complex, where L10 forms an elongated spine to which 2 to 4 L12 dimers bind in a sequential fashion. Binds GTP-bound translation factors.

In terms of biological role, forms part of the ribosomal stalk which helps the ribosome interact with GTP-bound translation factors. Is thus essential for accurate translation. The sequence is that of Large ribosomal subunit protein bL12 from Azobacteroides pseudotrichonymphae genomovar. CFP2.